Here is a 320-residue protein sequence, read N- to C-terminus: Mitochondrial thiamine pyrophosphate carrier 1 (320 aa).

Solcar repeat units follow at residues 12 to 110 (GTRR…TTQA), 119 to 205 (PQPV…LRPS), and 213 to 308 (PFGS…TLRA). Helical transmembrane passes span 17–35 (VVLA…VAPL), 91–107 (LMYV…YRTT), 125–145 (FVAG…LDLL), 180–197 (GCSA…LFFA), 219–239 (ALAG…LDLV), and 283–300 (GLTV…VTMW).

This sequence belongs to the mitochondrial carrier (TC 2.A.29) family.

Its subcellular location is the mitochondrion inner membrane. Mitochondrial transporter that mediates uptake of thiamine pyrophosphate (ThPP) into mitochondria. This chain is Mitochondrial thiamine pyrophosphate carrier 1 (tpc1), found in Aspergillus terreus (strain NIH 2624 / FGSC A1156).